Here is a 45-residue protein sequence, read N- to C-terminus: Large ribosomal subunit protein bL36 (45 aa).

Positions 1 to 45 are disordered; the sequence is MRVSSSIKADPSKGDKLVRRKGRLYVINKKDPNRKQRQAGPARKK.

Belongs to the bacterial ribosomal protein bL36 family.

This is Large ribosomal subunit protein bL36 from Chlamydia trachomatis serovar L2 (strain ATCC VR-902B / DSM 19102 / 434/Bu).